The sequence spans 106 residues: MVIKVFLASSSSFVTIKKRQQEVLQFLEANRIEYEEVDITMLEEMRQWMYKNIPKDRLPGQGNPLPPQIFNDNAYCGDYESFFESKESNTVFLFLQLKARPAQKEL.

The SH3-binding motif lies at 61-67 (QGNPLPP).

Belongs to the SH3BGR family.

It localises to the nucleus. The polypeptide is SH3 domain-binding glutamic acid-rich-like protein 2-A (sh3bgrl2-a) (Xenopus laevis (African clawed frog)).